Consider the following 208-residue polypeptide: Thymidylate kinase (208 aa).

An ATP-binding site is contributed by 10–17 (GGEGAGKS).

This sequence belongs to the thymidylate kinase family.

The catalysed reaction is dTMP + ATP = dTDP + ADP. In terms of biological role, phosphorylation of dTMP to form dTDP in both de novo and salvage pathways of dTTP synthesis. This chain is Thymidylate kinase, found in Alcanivorax borkumensis (strain ATCC 700651 / DSM 11573 / NCIMB 13689 / SK2).